A 100-amino-acid polypeptide reads, in one-letter code: uncharacterized protein (100 aa).

A helical membrane pass occupies residues 68 to 88 (VFLFFFTGSSPSFPAALLGLF).

It is found in the membrane. This is an uncharacterized protein from Saccharomyces cerevisiae (strain ATCC 204508 / S288c) (Baker's yeast).